A 180-amino-acid polypeptide reads, in one-letter code: MALSREETARRYGTAIFDFAKDSGKTELMYSELTELKKAVQAEPRFVQVLSNPVLDAKQKKSLLTAVEQGFSAELQEVLNFLLSYDRFDNLVDIIDYYIHLYNAANHIGTGVAKTVLKLDEDQLQRLADSYAKKYGLQALHLENEVDPEIIGGVVLEVEGRVIDGSVKHRLEKIRAMLTK.

This sequence belongs to the ATPase delta chain family. As to quaternary structure, F-type ATPases have 2 components, F(1) - the catalytic core - and F(0) - the membrane proton channel. F(1) has five subunits: alpha(3), beta(3), gamma(1), delta(1), epsilon(1). F(0) has three main subunits: a(1), b(2) and c(10-14). The alpha and beta chains form an alternating ring which encloses part of the gamma chain. F(1) is attached to F(0) by a central stalk formed by the gamma and epsilon chains, while a peripheral stalk is formed by the delta and b chains.

The protein localises to the cell membrane. Its function is as follows. F(1)F(0) ATP synthase produces ATP from ADP in the presence of a proton or sodium gradient. F-type ATPases consist of two structural domains, F(1) containing the extramembraneous catalytic core and F(0) containing the membrane proton channel, linked together by a central stalk and a peripheral stalk. During catalysis, ATP synthesis in the catalytic domain of F(1) is coupled via a rotary mechanism of the central stalk subunits to proton translocation. This protein is part of the stalk that links CF(0) to CF(1). It either transmits conformational changes from CF(0) to CF(1) or is implicated in proton conduction. This Lactobacillus delbrueckii subsp. bulgaricus (strain ATCC 11842 / DSM 20081 / BCRC 10696 / JCM 1002 / NBRC 13953 / NCIMB 11778 / NCTC 12712 / WDCM 00102 / Lb 14) protein is ATP synthase subunit delta.